The chain runs to 159 residues: Probable epoxidase scpX (159 aa).

A signal peptide spans 1–25 (MATLIRLLRLLPVASSSAVLMFALD). 2 helical membrane-spanning segments follow: residues 59–79 (WVLIIFYPVNYILGILNLFIS) and 96–116 (LLFSIAHMFYLFRALKLIAAI). Asn124 and Asn136 each carry an N-linked (GlcNAc...) asparagine glycan. Residues 139-159 (RALLTDLPAWLCFIAAALKAL) form a helical membrane-spanning segment.

Belongs to the epoxidase xenD family.

The protein localises to the membrane. It functions in the pathway mycotoxin biosynthesis. In terms of biological role, probable epoxidase; part of the gene scp cluster that mediates the biosynthesis of a hirsutellone-like compound that has still to be identified. The sequence is that of Probable epoxidase scpX from Mollisia scopiformis (Conifer needle endophyte fungus).